We begin with the raw amino-acid sequence, 263 residues long: LIM and SH3 domain protein 1 (263 aa).

Met-1 bears the N-acetylmethionine mark. The region spanning 5–56 (CARCGKIVYPTEKVNCLDKYWHKACFHCETCKMTLNMKNYKGYEKKPYCNAH) is the LIM zinc-binding domain. The residue at position 42 (Lys-42) is an N6-acetyllysine. Nebulin repeat units lie at residues 61–95 (SFTMVADTPENLRLKQQSELQSQVRYKEEFEKNKG) and 97–131 (GFSVVADTPELQRIKKTQDQISNIKYHEEFEKSRM). The residue at position 68 (Thr-68) is a Phosphothreonine. Lys-75 carries the N6-methyllysine modification. Position 99 is a phosphoserine (Ser-99). Thr-104 carries the post-translational modification Phosphothreonine. At Lys-112 the chain carries N6-succinyllysine. Phosphoserine is present on residues Ser-118 and Ser-134. A disordered region spans residues 123–207 (HEEFEKSRMG…QRSAPGGGGK (85 aa)). Residues 148-162 (DSSSYRRPTEQQQPQ) are compositionally biased toward polar residues. Position 156 is a phosphothreonine; by PKA (Thr-156). Residues 204 to 263 (GGGKRYRAVYDYSAADEDEVSFQDGDTIVNVQQIDDGWMYGTVERTGDTGMLPANYVEAI) form the SH3 domain.

As to quaternary structure, interacts with F-actin. Interacts with KBTBD10. Interacts with ANKRD54.

It is found in the cytoplasm. It localises to the cell cortex. The protein resides in the cytoskeleton. Its function is as follows. Plays an important role in the regulation of dynamic actin-based, cytoskeletal activities. Agonist-dependent changes in LASP1 phosphorylation may also serve to regulate actin-associated ion transport activities, not only in the parietal cell but also in certain other F-actin-rich secretory epithelial cell types. This chain is LIM and SH3 domain protein 1 (Lasp1), found in Mus musculus (Mouse).